A 238-amino-acid polypeptide reads, in one-letter code: Large ribosomal subunit protein uL2 (238 aa).

Positions 197 to 219 (ASDHPFGGKRHSNHSKPFTVSKW) are disordered.

It belongs to the universal ribosomal protein uL2 family. Part of the 50S ribosomal subunit. Forms a bridge to the 30S subunit in the 70S ribosome.

Its function is as follows. One of the primary rRNA binding proteins. Required for association of the 30S and 50S subunits to form the 70S ribosome, for tRNA binding and peptide bond formation. It has been suggested to have peptidyltransferase activity; this is somewhat controversial. Makes several contacts with the 16S rRNA in the 70S ribosome. This Nanoarchaeum equitans (strain Kin4-M) protein is Large ribosomal subunit protein uL2.